Consider the following 1485-residue polypeptide: Chromosome partition protein MukB (1485 aa).

Residue 34–41 (GGNGAGKS) coordinates ATP. 6 coiled-coil regions span residues 337-480 (LNLV…QAYQ), 509-605 (QHLA…PVWL), 780-805 (RAAR…ATLS), 835-915 (EAEI…IQQH), 977-1116 (GMLT…AKAG), and 1210-1235 (EAIE…KLAI). The flexible hinge stretch occupies residues 666–783 (PSGAEDARLI…EVPLFGRAAR (118 aa)).

It belongs to the SMC family. MukB subfamily. As to quaternary structure, homodimerization via its hinge domain. Binds to DNA via its C-terminal region. Interacts, and probably forms a ternary complex, with MukE and MukF via its C-terminal region. The complex formation is stimulated by calcium or magnesium. Interacts with tubulin-related protein FtsZ.

Its subcellular location is the cytoplasm. The protein resides in the nucleoid. In terms of biological role, plays a central role in chromosome condensation, segregation and cell cycle progression. Functions as a homodimer, which is essential for chromosome partition. Involved in negative DNA supercoiling in vivo, and by this means organize and compact chromosomes. May achieve or facilitate chromosome segregation by condensation DNA from both sides of a centrally located replisome during cell division. The polypeptide is Chromosome partition protein MukB (Yersinia pestis bv. Antiqua (strain Antiqua)).